The primary structure comprises 367 residues: Glutamate 5-kinase (367 aa).

Lys10 lines the ATP pocket. Positions 50, 137, and 149 each coordinate substrate. ATP-binding positions include 169 to 170 and 211 to 217; these read TD and TGGMSTK. The PUA domain maps to 275-353; sequence AGEITVDEGA…QEIDAILGYE (79 aa).

It belongs to the glutamate 5-kinase family.

Its subcellular location is the cytoplasm. It catalyses the reaction L-glutamate + ATP = L-glutamyl 5-phosphate + ADP. It participates in amino-acid biosynthesis; L-proline biosynthesis; L-glutamate 5-semialdehyde from L-glutamate: step 1/2. Functionally, catalyzes the transfer of a phosphate group to glutamate to form L-glutamate 5-phosphate. The polypeptide is Glutamate 5-kinase (Escherichia coli O81 (strain ED1a)).